Consider the following 64-residue polypeptide: Large ribosomal subunit protein uL30 (64 aa).

This sequence belongs to the universal ribosomal protein uL30 family. In terms of assembly, part of the 50S ribosomal subunit.

The chain is Large ribosomal subunit protein uL30 from Rhodopseudomonas palustris (strain BisA53).